Here is a 216-residue protein sequence, read N- to C-terminus: Hydrogenase-4 component E (216 aa).

Residues 1 to 3 lie on the Periplasmic side of the membrane; the sequence is MTG. A helical membrane pass occupies residues 4–24; that stretch reads SMIVNNLAGLMMLTSLFVISV. Residues 25-38 are Cytoplasmic-facing; the sequence is KSYRLSCGFYACQS. 2 helical membrane passes run 39-59 and 60-80; these read LVLVSIFATLSCLFAAEQLLI and WSASAFITKVLLVPLIMTYAA. The Cytoplasmic segment spans residues 81 to 92; it reads RNIPQNIPEKAL. Residues 93–113 form a helical membrane-spanning segment; it reads FGPAMMALLAALIVLLCAFVV. Residues 114 to 122 lie on the Periplasmic side of the membrane; it reads QPVKLPMAT. The helical transmembrane segment at 123–143 threads the bilayer; sequence GLKPALAVALGHFLLGLLCIV. At 144–150 the chain is on the cytoplasmic side; it reads SQRNILR. A helical membrane pass occupies residues 151-171; sequence QIFGYCLMENGSHLVLALLAW. The Periplasmic portion of the chain corresponds to 172-175; it reads RAPE. Residues 176–196 form a helical membrane-spanning segment; the sequence is LVEIGIATDAIFAVIVMVLLA. The Cytoplasmic segment spans residues 197 to 216; the sequence is RKIWRTHGTLDVNNLTALKG.

It is found in the cell inner membrane. The polypeptide is Hydrogenase-4 component E (hyfE) (Escherichia coli O157:H7).